The chain runs to 289 residues: Protease HtpX (289 aa).

2 helical membrane passes run 7-27 and 38-58; these read LFLL…NIIF and GGIL…SLFM. His144 contacts Zn(2+). The active site involves Glu145. His148 contacts Zn(2+). A run of 2 helical transmembrane segments spans residues 155 to 175 and 194 to 214; these read VTMT…SRII and LVFW…ATMI. Glu223 is a binding site for Zn(2+).

Belongs to the peptidase M48B family. The cofactor is Zn(2+).

It localises to the cell inner membrane. In Actinobacillus pleuropneumoniae serotype 5b (strain L20), this protein is Protease HtpX.